Here is a 323-residue protein sequence, read N- to C-terminus: MSTTKALSLLVFILFVSLVHSSDQCPINSIYQFGDSISDTGNLIRNGPASSPTPKPLPQREHNVFVNFGVSGSTALNSSFFSERNLHVPATNTPLSMQLAWFKGHLRSTCHGSSSDCLKHSLFMVGEIGGNDYNYGFFQGKPMEEIRSYIPHVVGAITAAAREVIRAGAVNVVVPGNFPVGCFPIYLTSFPVKDTKDYDDNGCLTHLNEFAMDHNNQLQEAIASLRKEFPDVAIVYGDYYNAFQYVLRSERFDKSVALKSCCGTGGAYNYDGKRPYGAVGVPVCQNPHKFISWDGVHLTQKAYRFMSKFLNNQILSQIKCTRA.

Positions methionine 1 to serine 21 are cleaved as a signal peptide. The active-site Nucleophile is the serine 36. Asparagine 77 is a glycosylation site (N-linked (GlcNAc...) asparagine). Catalysis depends on residues aspartate 294 and histidine 297.

The protein belongs to the 'GDSL' lipolytic enzyme family.

The protein localises to the secreted. The protein is GDSL esterase/lipase At5g03980 of Arabidopsis thaliana (Mouse-ear cress).